The following is a 272-amino-acid chain: Digeranylgeranylglyceryl phosphate synthase (272 aa).

A run of 8 helical transmembrane segments spans residues Ala16–Leu36, Ala79–Leu99, Glu100–Lys120, Phe124–Ile144, Val148–Ile168, Ala194–Tyr214, Ile217–Ala237, and Ile252–Leu272.

It belongs to the UbiA prenyltransferase family. DGGGP synthase subfamily. Mg(2+) serves as cofactor.

It is found in the cell membrane. It carries out the reaction sn-3-O-(geranylgeranyl)glycerol 1-phosphate + (2E,6E,10E)-geranylgeranyl diphosphate = 2,3-bis-O-(geranylgeranyl)-sn-glycerol 1-phosphate + diphosphate. It functions in the pathway membrane lipid metabolism; glycerophospholipid metabolism. In terms of biological role, prenyltransferase that catalyzes the transfer of the geranylgeranyl moiety of geranylgeranyl diphosphate (GGPP) to the C2 hydroxyl of (S)-3-O-geranylgeranylglyceryl phosphate (GGGP). This reaction is the second ether-bond-formation step in the biosynthesis of archaeal membrane lipids. The protein is Digeranylgeranylglyceryl phosphate synthase of Methanosphaera stadtmanae (strain ATCC 43021 / DSM 3091 / JCM 11832 / MCB-3).